The chain runs to 328 residues: MMENVFDYEDIQLIPAKCIVNSRSECDTTVTLGKHKFKLPVVPANMQTIIDERIATYLAENNYFYIMHRFQPEKRISFIRDMQSRGLIASISVGVKEDEYEFVQQLAAEHLTPEYITIDIAHGHSNAVINMIQHIKKHLPESFVIAGNVGTPEAVRELENAGADATKVGIGPGKVCITKIKTGFGTGGWQLAALRWCAKAASKPIIADGGIRTHGDVAKSIRFGATMVMIGSLFAGHEESPGETIEKDGKLYKEYFGSASEFQKGEKKNVEGKKMFVEHKGSLEDTLIEMEQDLQSSISYAGGTKLDSIRTVDYVVVKNSIFNGDKVY.

Residue Cys176 is the Thioimidate intermediate of the active site. Position 205 to 228 (205 to 228) interacts with NADP(+); sequence IIADGGIRTHGDVAKSIRFGATMV.

It belongs to the IMPDH/GMPR family. GuaC type 2 subfamily.

The enzyme catalyses IMP + NH4(+) + NADP(+) = GMP + NADPH + 2 H(+). Functionally, catalyzes the irreversible NADPH-dependent deamination of GMP to IMP. It functions in the conversion of nucleobase, nucleoside and nucleotide derivatives of G to A nucleotides, and in maintaining the intracellular balance of A and G nucleotides. The protein is GMP reductase of Bacillus thuringiensis (strain Al Hakam).